The chain runs to 96 residues: Co-chaperonin GroES (96 aa).

This sequence belongs to the GroES chaperonin family. Heptamer of 7 subunits arranged in a ring. Interacts with the chaperonin GroEL.

The protein resides in the cytoplasm. Its function is as follows. Together with the chaperonin GroEL, plays an essential role in assisting protein folding. The GroEL-GroES system forms a nano-cage that allows encapsulation of the non-native substrate proteins and provides a physical environment optimized to promote and accelerate protein folding. GroES binds to the apical surface of the GroEL ring, thereby capping the opening of the GroEL channel. The sequence is that of Co-chaperonin GroES from Vibrio campbellii (strain ATCC BAA-1116).